The sequence spans 113 residues: Large ribosomal subunit protein uL22 (113 aa).

It belongs to the universal ribosomal protein uL22 family. As to quaternary structure, part of the 50S ribosomal subunit.

In terms of biological role, this protein binds specifically to 23S rRNA; its binding is stimulated by other ribosomal proteins, e.g. L4, L17, and L20. It is important during the early stages of 50S assembly. It makes multiple contacts with different domains of the 23S rRNA in the assembled 50S subunit and ribosome. The globular domain of the protein is located near the polypeptide exit tunnel on the outside of the subunit, while an extended beta-hairpin is found that lines the wall of the exit tunnel in the center of the 70S ribosome. The sequence is that of Large ribosomal subunit protein uL22 from Solibacter usitatus (strain Ellin6076).